The sequence spans 322 residues: Germ cell-specific gene 1-like protein (322 aa).

The Cytoplasmic portion of the chain corresponds to 1–8; it reads MELSRRNR. Residues 9 to 29 form a helical membrane-spanning segment; sequence SLLSVVLNLLALSFSVAAFFT. The Extracellular portion of the chain corresponds to 30 to 125; sequence SYWCEGTHKV…IELSPDSEKG (96 aa). The chain crosses the membrane as a helical span at residues 126–146; sequence VLWLSVISEFLYIILLSLGFL. The Cytoplasmic portion of the chain corresponds to 147 to 166; the sequence is LMCLEFFSSSNFIDGLKINA. Residues 167–187 traverse the membrane as a helical segment; it reads FAAIITVLSGLLGMVAHMMYM. The Extracellular portion of the chain corresponds to 188–209; it reads TVFQVTVNLGPKDWRPQTWYYG. A helical transmembrane segment spans residues 210-230; it reads WSFGLAWLSFTLCMSASVLTL. Over 231–322 the chain is Cytoplasmic; the sequence is NTYTKTILEF…MDLEDDGDQC (92 aa).

This sequence belongs to the GSG1 family. In terms of assembly, component of the AMPAR complex.

Its subcellular location is the cell membrane. It is found in the synapse. Functionally, as a component of the AMPAR complex, modifies AMPA receptor (AMPAR) gating. The chain is Germ cell-specific gene 1-like protein (gsg1l) from Xenopus tropicalis (Western clawed frog).